The chain runs to 709 residues: MTINTDDQYADGESKTTISSNRRYSTSSFQDQSMEDDGINATLTNDKATLIQVWRPKSYGSVKGQIPAQDRLTYTWREIDVFGQAAIDGKSREPLCSRLRHCFTRQRLVKDFNPRKHLLKNVTGVARSGELLAVMGSSGAGKTTLLNELAFRSPPGVKISPNAIRTLNGVPVTAEQMRARCAYVQQDDLFIPSLTTKEHLMFQAMLRMGRDVPATPIKMHRVDEVLQELSLVKCADTIIGVAGRVKGLSGGERKRTAFRSETLTDPHLLLCDEPTSSLDSFMAQSVLQVLKGMAMKGKTIILTIHQPSSELYCLFDRILLVAEGVAFLGSPYQSADFFSQLGIPCPPNYNPADFYVQMLAIAPNKETECRETIKKICDSFAVSPIARDIIETASQVNGDGGIELTRTKHTTDPYFLQPMEGVDSTGYRASWWTQFYCILWRSWLSVLKDPMLVKVRLLQTAMVASLIGSIYFGQVLDQDGVMNINGSLFLFLTNMTFQNVFAVINVFSAELPVFLREKRSRLYRVDTYFLGKTIAELPLFIAVPFVFTSITYPMIGLKAAISHYLTTLFIVTLVANVSTSFGYLISCASSSISMALSVGPPVVIPFLIFGGFFLNSASVPAYFKYLSYLSWFRYANEALLINQWADHRDGEIGCTRANVTCPASGEIILETFNFRVEDFALDIGCLFALIVLFRLGALFCLWLRSRSKE.

The disordered stretch occupies residues 1 to 35; that stretch reads MTINTDDQYADGESKTTISSNRRYSTSSFQDQSME. A compositionally biased stretch (polar residues) spans 15 to 32; the sequence is KTTISSNRRYSTSSFQDQ. Residues 103–348 form the ABC transporter domain; the sequence is FTRQRLVKDF…SQLGIPCPPN (246 aa). ATP is bound by residues 136-143 and 292-299; these read GSSGAGKT and GMAMKGKT. The helical transmembrane segment at 457–475 threads the bilayer; sequence LLQTAMVASLIGSIYFGQV. An N-linked (GlcNAc...) asparagine glycan is attached at asparagine 485. The next 4 helical transmembrane spans lie at 487–507, 537–555, 564–585, and 598–616; these read SLFL…INVF, LPLF…YPMI, YLTT…GYLI, and VGPP…FLNS. The N-linked (GlcNAc...) asparagine glycan is linked to asparagine 658. A helical membrane pass occupies residues 681-700; the sequence is LDIGCLFALIVLFRLGALFC.

The protein belongs to the ABC transporter superfamily. ABCG family. Eye pigment precursor importer (TC 3.A.1.204) subfamily.

It is found in the membrane. Its function is as follows. May be part of a membrane-spanning permease system necessary for the transport of pigment precursors into pigment cells responsible for eye color. In Anopheles albimanus (New world malaria mosquito), this protein is Protein white (W).